Reading from the N-terminus, the 132-residue chain is ATP synthase epsilon chain, chloroplastic (132 aa).

At threonine 2 the chain carries N-acetylthreonine.

It belongs to the ATPase epsilon chain family. As to quaternary structure, F-type ATPases have 2 components, CF(1) - the catalytic core - and CF(0) - the membrane proton channel. CF(1) has five subunits: alpha(3), beta(3), gamma(1), delta(1), epsilon(1). CF(0) has three main subunits: a, b and c.

The protein resides in the plastid. Its subcellular location is the chloroplast thylakoid membrane. Produces ATP from ADP in the presence of a proton gradient across the membrane. The protein is ATP synthase epsilon chain, chloroplastic of Arabidopsis thaliana (Mouse-ear cress).